The sequence spans 1418 residues: Sterol 3-beta-glucosyltransferase (1418 aa).

Over residues 1–16 (MRPFLDDAKRRVDRKL) the composition is skewed to basic and acidic residues. 3 disordered regions span residues 1-59 (MRPF…SREG), 83-188 (ARFD…RSAT), and 207-233 (LKAS…ASVS). Over residues 18–28 (ASRQSLSTSRL) the composition is skewed to polar residues. Composition is skewed to basic and acidic residues over residues 35-44 (DRLKDNHDAQ) and 95-105 (SEQRPRKESSV). Residues 106–115 (RKGTSASANT) are compositionally biased toward polar residues. Positions 116 to 126 (SSPLDSSQRSS) are enriched in low complexity. Basic and acidic residues-rich tracts occupy residues 127–139 (SRTD…ESGT) and 147–166 (TISD…HEPQ). A compositionally biased stretch (polar residues) spans 209 to 219 (ASSTERSQPSL). The GRAM 1 domain maps to 249 to 288 (EKVLVEYACSLLQSILLQGYMYVTEGHICFYAYLPKKSTV). Residues 289–387 (AIKSGYLYKR…WVKALQKVIF (99 aa)) enclose the PH domain. Residues 462-651 (ISSQHLSPQP…DPTKSFSGAP (190 aa)) are disordered. The segment covering 486-497 (RWSLTSGTSRVL) has biased composition (polar residues). Low complexity predominate over residues 508–519 (ASASTSHTSLAH). Polar residues predominate over residues 534-575 (SESILNSFEQGTESSAAWQSMTDAAESASQILNRSDVFQSPT). A compositionally biased stretch (basic and acidic residues) spans 578-598 (GLDRRPSGGERRGRRNSDETA). The span at 599–612 (RSLSTRANVGTGQQ) shows a compositional bias: polar residues. The segment covering 615–633 (ELGRRMDGDTSGREARDST) has biased composition (basic and acidic residues). Polar residues predominate over residues 635–651 (ESDQYTQDPTKSFSGAP). One can recognise a GRAM 2 domain in the interval 733-799 (DRFRAHFALP…RDIENVEKEK (67 aa)). Residues S920, R921, D923, A1223, H1225, H1238, G1242, T1243, D1262, and Q1263 each contribute to the UDP-alpha-D-glucose site. Positions 1339–1418 (SIASSTPFSP…SGPGRKLSGR (80 aa)) are disordered. Positions 1341 to 1355 (ASSTPFSPTPSAKTT) are enriched in low complexity. Over residues 1358 to 1379 (QDADDDVEDSEEWTFVGDDTDM) the composition is skewed to acidic residues. The span at 1380–1391 (EMSRRLRDRAIS) shows a compositional bias: basic and acidic residues.

This sequence belongs to the glycosyltransferase 28 family.

The protein resides in the cytoplasm. Its subcellular location is the preautophagosomal structure membrane. It carries out the reaction a sterol + UDP-alpha-D-glucose = a sterol 3-beta-D-glucoside + UDP + H(+). The enzyme catalyses ergosterol + UDP-alpha-D-glucose = ergosteryl 3-beta-D-glucoside + UDP + H(+). Sterol glycosyltransferase responsible for the glycosylation of ergosterol to form ergosterol-glucoside. The chain is Sterol 3-beta-glucosyltransferase from Neosartorya fischeri (strain ATCC 1020 / DSM 3700 / CBS 544.65 / FGSC A1164 / JCM 1740 / NRRL 181 / WB 181) (Aspergillus fischerianus).